We begin with the raw amino-acid sequence, 133 residues long: Fatty acid-binding protein homolog 2 (133 aa).

Residues arginine 107 and 127-129 (RTY) each bind a fatty acid.

It belongs to the calycin superfamily. Fatty-acid binding protein (FABP) family.

Functionally, may play a role in the acquisition, storage, and transport of lipids, and may be important to the organism since it is incapable of synthesizing most of its lipids de novo. This is Fatty acid-binding protein homolog 2 (FABP2) from Echinococcus granulosus (Hydatid tapeworm).